The primary structure comprises 379 residues: DnaJ homolog subfamily B member 14 (379 aa).

Residues 1–244 lie on the Cytoplasmic side of the membrane; it reads MEGNRDEAEK…GHEREEERGD (244 aa). The tract at residues 55–94 is disordered; that stretch reads STAGNSPHCRKPSGSGDQSKPNCTKDSTSGSGEGGKGYTK. Residues 69-84 show a composition bias toward polar residues; the sequence is SGDQSKPNCTKDSTSG. Positions 108–172 constitute a J domain; it reads NYYEVLGVTK…EKRKQYDLTG (65 aa). The segment at 219–241 is disordered; that stretch reads SNGRAGYSQQHQHRHSGHEREEE. The chain crosses the membrane as a helical span at residues 245 to 265; sequence GGFSVFIQLMPIIVLILVSLL. The Lumenal portion of the chain corresponds to 266–379; sequence SQLMVSNPPY…ERLTSLYKGG (114 aa).

This sequence belongs to the DnaJ family. DNAJB12/DNAJB14 subfamily. In terms of assembly, interacts (via J domain) with HSPA8/Hsc70. Forms a multiprotein complex, at least composed of DNAJB12, DNAJB14, HSPA8/Hsc70 and SGTA; interaction with DNAJB14 and HSPA8/Hsc70 is direct.

The protein resides in the endoplasmic reticulum membrane. The protein localises to the nucleus membrane. Functionally, acts as a co-chaperone with HSPA8/Hsc70; required to promote protein folding and trafficking, prevent aggregation of client proteins, and promote unfolded proteins to endoplasmic reticulum-associated degradation (ERAD) pathway. Acts by determining HSPA8/Hsc70's ATPase and polypeptide-binding activities. Can also act independently of HSPA8/Hsc70: together with DNAJB12, acts as a chaperone that promotes maturation of potassium channels KCND2 and KCNH2 by stabilizing nascent channel subunits and assembling them into tetramers. While stabilization of nascent channel proteins is dependent on HSPA8/Hsc70, the process of oligomerization of channel subunits is independent of HSPA8/Hsc70. When overexpressed, forms membranous structures together with DNAJB12 and HSPA8/Hsc70 within the nucleus; the role of these structures, named DJANGOs, is still unclear. In terms of biological role, (Microbial infection) In case of infection by polyomavirus, involved in the virus endoplasmic reticulum membrane penetration and infection. The polypeptide is DnaJ homolog subfamily B member 14 (Homo sapiens (Human)).